A 215-amino-acid chain; its full sequence is Peroxiredoxin (215 aa).

The 156-residue stretch at 3-158 (PLLGDNFPEI…ILRAVKALQV (156 aa)) folds into the Thioredoxin domain. The Cysteine sulfenic acid (-SOH) intermediate role is filled by Cys-45. Substrate is bound at residue Arg-121. The cysteines at positions 205 and 211 are disulfide-linked.

This sequence belongs to the peroxiredoxin family. Prx6 subfamily. In terms of assembly, homodecamer. Pentamer of dimers that assemble into a ring structure.

It is found in the cytoplasm. The catalysed reaction is a hydroperoxide + [thioredoxin]-dithiol = an alcohol + [thioredoxin]-disulfide + H2O. Its function is as follows. Thiol-specific peroxidase that catalyzes the reduction of hydrogen peroxide and organic hydroperoxides to water and alcohols, respectively. Plays a role in cell protection against oxidative stress by detoxifying peroxides. The protein is Peroxiredoxin of Archaeoglobus fulgidus (strain ATCC 49558 / DSM 4304 / JCM 9628 / NBRC 100126 / VC-16).